A 178-amino-acid chain; its full sequence is Inorganic pyrophosphatase (178 aa).

Residues Lys30, Arg44, and Tyr56 each contribute to the substrate site. Asp66, Asp71, and Asp103 together coordinate Mg(2+). Tyr140 is a substrate binding site.

Belongs to the PPase family. As to quaternary structure, homohexamer. Mg(2+) serves as cofactor.

It is found in the cytoplasm. It catalyses the reaction diphosphate + H2O = 2 phosphate + H(+). Functionally, catalyzes the hydrolysis of inorganic pyrophosphate (PPi) forming two phosphate ions. The sequence is that of Inorganic pyrophosphatase from Pyrococcus furiosus (strain ATCC 43587 / DSM 3638 / JCM 8422 / Vc1).